The primary structure comprises 443 residues: Probable D-serine dehydratase (443 aa).

The residue at position 116 (Lys-116) is an N6-(pyridoxal phosphate)lysine.

This sequence belongs to the serine/threonine dehydratase family. DsdA subfamily. It depends on pyridoxal 5'-phosphate as a cofactor.

The catalysed reaction is D-serine = pyruvate + NH4(+). The polypeptide is Probable D-serine dehydratase (Bacillus cereus (strain B4264)).